The following is a 122-amino-acid chain: uncharacterized protein (122 aa).

This is an uncharacterized protein from Methanothermobacter thermautotrophicus (Methanobacterium thermoformicicum).